Here is a 322-residue protein sequence, read N- to C-terminus: 4-hydroxy-3-methylbut-2-enyl diphosphate reductase 1 (322 aa).

Cys-18 lines the [4Fe-4S] cluster pocket. (2E)-4-hydroxy-3-methylbut-2-enyl diphosphate is bound by residues His-47 and His-82. 2 residues coordinate dimethylallyl diphosphate: His-47 and His-82. The isopentenyl diphosphate site is built by His-47 and His-82. Cys-104 lines the [4Fe-4S] cluster pocket. Residue His-132 participates in (2E)-4-hydroxy-3-methylbut-2-enyl diphosphate binding. His-132 contacts dimethylallyl diphosphate. His-132 contributes to the isopentenyl diphosphate binding site. Residue Glu-134 is the Proton donor of the active site. Thr-173 contacts (2E)-4-hydroxy-3-methylbut-2-enyl diphosphate. Position 203 (Cys-203) interacts with [4Fe-4S] cluster. Ser-231, Ser-232, Asn-233, and Ser-276 together coordinate (2E)-4-hydroxy-3-methylbut-2-enyl diphosphate. 4 residues coordinate dimethylallyl diphosphate: Ser-231, Ser-232, Asn-233, and Ser-276. Residues Ser-231, Ser-232, Asn-233, and Ser-276 each coordinate isopentenyl diphosphate.

Belongs to the IspH family. It depends on [4Fe-4S] cluster as a cofactor.

It catalyses the reaction isopentenyl diphosphate + 2 oxidized [2Fe-2S]-[ferredoxin] + H2O = (2E)-4-hydroxy-3-methylbut-2-enyl diphosphate + 2 reduced [2Fe-2S]-[ferredoxin] + 2 H(+). It carries out the reaction dimethylallyl diphosphate + 2 oxidized [2Fe-2S]-[ferredoxin] + H2O = (2E)-4-hydroxy-3-methylbut-2-enyl diphosphate + 2 reduced [2Fe-2S]-[ferredoxin] + 2 H(+). It participates in isoprenoid biosynthesis; dimethylallyl diphosphate biosynthesis; dimethylallyl diphosphate from (2E)-4-hydroxy-3-methylbutenyl diphosphate: step 1/1. Its pathway is isoprenoid biosynthesis; isopentenyl diphosphate biosynthesis via DXP pathway; isopentenyl diphosphate from 1-deoxy-D-xylulose 5-phosphate: step 6/6. Its function is as follows. Catalyzes the conversion of 1-hydroxy-2-methyl-2-(E)-butenyl 4-diphosphate (HMBPP) into a mixture of isopentenyl diphosphate (IPP) and dimethylallyl diphosphate (DMAPP). Acts in the terminal step of the DOXP/MEP pathway for isoprenoid precursor biosynthesis. The protein is 4-hydroxy-3-methylbut-2-enyl diphosphate reductase 1 of Bradyrhizobium diazoefficiens (strain JCM 10833 / BCRC 13528 / IAM 13628 / NBRC 14792 / USDA 110).